Here is a 330-residue protein sequence, read N- to C-terminus: MGTTTTHKFDRPLRLPPLPCPFPSEVNPYVEQVDKETLEWLIDSEMLDDAETVERYRQAKYGWLSARTYPYAEHHTLRLVSDWCVWLFAFDDAFCESDRRAAEIARALPQLYAVLEDLDVGSEVDDVFAKSLLEIKGRIAAYGDDEQLDRWRNVTKDYLFAQVWEAANREDEVVPSLEDYIFMRRRTGAMLTVFALIDVASGRSLSADEWRHPGMRAITESANDVVVWDNDLISYAKESNSGNSRNNLVNVLAEHRHYSRQEAMEEIGEMRNQAIADMVAVRPSLEALGSDAVLAYVRGLEFWISGSVDYSLTSSRYTDAWRTARQPSIR.

Positions 91 and 96 each coordinate Mg(2+). Residues 91–96 (DDAFCE) carry the DDXXXE motif motif. Residue Arg184 participates in substrate binding. Positions 230 and 234 each coordinate Mg(2+). Lys237 is a substrate binding site. Mg(2+) is bound at residue Glu238. Residue 316-317 (RY) participates in substrate binding.

The protein belongs to the terpene synthase family. The cofactor is Mg(2+).

The catalysed reaction is (2E,6E)-farnesyl diphosphate + H2O = 4-epi-cubebol + diphosphate. The protein operates within secondary metabolite biosynthesis; terpenoid biosynthesis. Its function is as follows. Catalyzes the conversion of (2E,6E)-farnesyl diphosphate (FPP) to yield the bicyclic sesquiterpenol 4-epi-cubebol via a 1,10-cyclization, which requires the abstraction of the pyrophosphate from FPP to yield a (E,E)-germacradienyl cation. The only accepted substrate is (2E,6E)-farnesyl diphosphate (FPP). The chain is 4-epi-cubebol synthase ((2E,6E)-farnesyl diphosphate cyclizing) from Streptosporangium roseum (strain ATCC 12428 / DSM 43021 / JCM 3005 / KCTC 9067 / NCIMB 10171 / NRRL 2505 / NI 9100).